The sequence spans 912 residues: LPS-assembly protein LptD (912 aa).

An N-terminal signal peptide occupies residues 1–27 (MLYSPLYQSIRLILFGALGLSSLTVSA).

Belongs to the LptD family. In terms of assembly, component of the lipopolysaccharide transport and assembly complex. Interacts with LptE and LptA.

It is found in the cell outer membrane. Together with LptE, is involved in the assembly of lipopolysaccharide (LPS) at the surface of the outer membrane. This chain is LPS-assembly protein LptD, found in Psychrobacter arcticus (strain DSM 17307 / VKM B-2377 / 273-4).